Consider the following 408-residue polypeptide: Phosphoglycerate kinase (408 aa).

Residues 22–24 (DIN), Arg-39, 60–63 (HQSR), Arg-117, and Arg-157 contribute to the substrate site. ATP-binding positions include Glu-332 and 358-361 (GGHT).

Belongs to the phosphoglycerate kinase family. In terms of assembly, monomer.

It localises to the cytoplasm. The enzyme catalyses (2R)-3-phosphoglycerate + ATP = (2R)-3-phospho-glyceroyl phosphate + ADP. It functions in the pathway carbohydrate degradation; glycolysis; pyruvate from D-glyceraldehyde 3-phosphate: step 2/5. This is Phosphoglycerate kinase from Thermoplasma volcanium (strain ATCC 51530 / DSM 4299 / JCM 9571 / NBRC 15438 / GSS1).